The chain runs to 277 residues: Putative hydroxypyruvate isomerase (277 aa).

Active-site proton donor/acceptor residues include glutamate 150 and glutamate 249.

It belongs to the hyi family.

The catalysed reaction is 3-hydroxypyruvate = 2-hydroxy-3-oxopropanoate. Its function is as follows. Catalyzes the reversible isomerization between hydroxypyruvate and 2-hydroxy-3-oxopropanoate (also termed tartronate semialdehyde). The sequence is that of Putative hydroxypyruvate isomerase (HYI) from Homo sapiens (Human).